Reading from the N-terminus, the 784-residue chain is Ribosome biogenesis protein BOP1 homolog (784 aa).

A compositionally biased stretch (basic residues) spans 1–11; the sequence is MTKKLALKRKG. A disordered region spans residues 1–159; the sequence is MTKKLALKRK…DSDTSDEEDI (159 aa). Acidic residues-rich tracts occupy residues 27-36, 45-54, 62-73, and 84-111; these read SENEEEEEDL, EDSTDDEGID, SEELQFESDEEG, and AEED…EDEE. The segment covering 112 to 123 has biased composition (basic and acidic residues); the sequence is KDSKSKQADDKP. The span at 124–133 shows a compositional bias: low complexity; that stretch reads SSSGAASKKA. Basic and acidic residues predominate over residues 138–148; it reads LSKRDTSKPEY. Residues 149–158 show a composition bias toward acidic residues; the sequence is QDSDTSDEED. WD repeat units lie at residues 445 to 486, 488 to 526, 570 to 612, 615 to 653, 656 to 695, 699 to 738, and 754 to 784; these read GHTD…RTIE, DEVV…KVLV, THFK…SQIP, KSKG…LVKK, TNSK…KPYQ, LHRN…DLLQ, and RDEF…RLYT.

It belongs to the WD repeat BOP1/ERB1 family.

The protein localises to the nucleus. Its subcellular location is the nucleolus. The protein resides in the nucleoplasm. In terms of biological role, required for maturation of ribosomal RNAs and formation of the large ribosomal subunit. The polypeptide is Ribosome biogenesis protein BOP1 homolog (Drosophila yakuba (Fruit fly)).